Here is a 1045-residue protein sequence, read N- to C-terminus: MDIS1-interacting receptor like kinase 2 (1045 aa).

Residues 1-43 form the signal peptide; the sequence is MNKTNPERKISLTSFKERMACKEKPRDLQVLLIISIVLSCSFA. The Extracellular portion of the chain corresponds to 44–709; sequence VSATVEEANA…SKKSHKDRNL (666 aa). N-linked (GlcNAc...) asparagine glycans are attached at residues Asn63, Asn77, Asn99, and Asn119. LRR repeat units follow at residues 92–116, 117–140, 141–165, 166–189, 191–212, 213–237, 238–260, 262–285, 286–309, 311–333, 334–356, 357–381, 383–405, 406–429, 431–452, 453–476, 477–501, 502–525, 527–549, 550–573, 575–597, 598–620, 621–644, and 646–670; these read LGSI…PFSS, LPNL…LWGR, FSKL…LGDL, SNLD…IGRL, KVTE…SFGN, LTKL…IGNL, PNLR…SFGN, KNVT…IGNM, TALD…LGNI, TLAV…LGEM, ESMI…SFGK, LTAL…IANS, ELTV…ICRG, GKLE…LRDC, SLIR…AFGV, YPTL…NWEQ, SQKL…IWNM, TQLS…ISNI, RISK…IRLL, TNLE…LNNL, RLYY…LTKL, SQLQ…QFRS, LQNL…SFKD, and LALT…AFRN. 2 N-linked (GlcNAc...) asparagine glycosylation sites follow: Asn179 and Asn212. Asn249, Asn263, and Asn284 each carry an N-linked (GlcNAc...) asparagine glycan. Residue Asn323 is glycosylated (N-linked (GlcNAc...) asparagine). Residues Asn380, Asn393, and Asn410 are each glycosylated (N-linked (GlcNAc...) asparagine). N-linked (GlcNAc...) asparagine glycosylation is found at Asn487 and Asn500. Asn580 carries an N-linked (GlcNAc...) asparagine glycan. Asn633 is a glycosylation site (N-linked (GlcNAc...) asparagine). Asn687 carries an N-linked (GlcNAc...) asparagine glycan. The chain crosses the membrane as a helical span at residues 710 to 730; the sequence is IIYILVPIIGAIIILSVCAGI. Residues 731 to 1045 are Cytoplasmic-facing; it reads FICFRKRTKQ…TMLSISTAFS (315 aa). Thr772 bears the Phosphothreonine mark. The 271-residue stretch at 775-1045 folds into the Protein kinase domain; the sequence is FDPKYLIGTG…TMLSISTAFS (271 aa). ATP is bound by residues 781 to 789 and Lys802; that span reads IGTGGHGKV. Tyr853 and Tyr892 each carry phosphotyrosine. The active-site Proton acceptor is Asp905. Ser938 bears the Phosphoserine mark. Tyr946 and Tyr953 each carry phosphotyrosine.

Belongs to the protein kinase superfamily. Ser/Thr protein kinase family. In terms of assembly, interacts with MDIS1 and LURE1.2. Binds to SCOOP12; this interaction triggers the formation of complex between MIK2 and the BAK1/SERK3 and SERK4 coreceptors. Expressed in pollen tubes. Highly expressed in shoots, roots and leaves.

It localises to the cell membrane. The enzyme catalyses L-seryl-[protein] + ATP = O-phospho-L-seryl-[protein] + ADP + H(+). It catalyses the reaction L-threonyl-[protein] + ATP = O-phospho-L-threonyl-[protein] + ADP + H(+). Its function is as follows. Acts as a receptor of SCOOP peptides from Brassicaceae plants regulating multiple processing including plant growth, development and stress responses. Perception of SCOOP peptides induces the association of MIK2 with the coreceptors BAK1/SERK3 and SERK4 and relays the signaling through the activation of receptor-like cytosolic kinases (RLCKs) BIK1 and PBL1. Also able to detect SCOOP-like proteins (SCOOPL) present in fungal Fusarium spp. and bacterial Comamonadaceae to elicit various immune responses, including growth inhibition, ROS production, calcium Ca(2+) influx, MAPK activation and MYB51 promoter activation in roots, thus being required for resistance to several root pathogens. Involved in the pollen tube perception of the female signal. Required to trigger defense responses toward generalist herbivores such as Spodoptera littoralis, probably via the activation of jasmonate and indole glucosinolate biosynthesis. This Arabidopsis thaliana (Mouse-ear cress) protein is MDIS1-interacting receptor like kinase 2.